The primary structure comprises 501 residues: Raftlin-2 (501 aa).

Disordered regions lie at residues 1-20 and 196-238; these read MGCG…GKIF and SWNE…SRKG. Residue G2 is the site of N-myristoyl glycine attachment. The S-palmitoyl cysteine moiety is linked to residue C3. A compositionally biased stretch (polar residues) spans 224 to 233; sequence MEQNGSPSSS. Residue S405 is modified to Phosphoserine. The tract at residues 407-454 is disordered; it reads AQTTDKKASRRIKGEDKNKATSRSIGLDTTTPQPAESRHPPEECRLSP. At T409 the chain carries Phosphothreonine. The span at 410–425 shows a compositional bias: basic and acidic residues; it reads TDKKASRRIKGEDKNK. Residues 427–440 are compositionally biased toward polar residues; it reads TSRSIGLDTTTPQP. S430 carries the phosphoserine modification. The span at 442 to 451 shows a compositional bias: basic and acidic residues; that stretch reads ESRHPPEECR.

Belongs to the raftlin family.

It is found in the cell membrane. Functionally, upon bacterial lipopolysaccharide stimulation, mediates clathrin-dependent internalization of TLR4 in dendritic cells, resulting in activation of TICAM1-mediated signaling and subsequent IFNB1 production. May regulate B-cell antigen receptor mediated-signaling. In Pongo abelii (Sumatran orangutan), this protein is Raftlin-2 (RFTN2).